We begin with the raw amino-acid sequence, 95 residues long: Enhancer of yellow 2b transcription factor (95 aa).

Belongs to the ENY2 family. Expressed specifically in testis.

Testis-specific paralog of the ubiquitously expressed transcription and mRNA export factor e(y)2. Cannot functionally replace e(y)2. This chain is Enhancer of yellow 2b transcription factor (e(y)2b), found in Drosophila melanogaster (Fruit fly).